The sequence spans 142 residues: Large ribosomal subunit protein uL11 (142 aa).

The protein belongs to the universal ribosomal protein uL11 family. As to quaternary structure, part of the ribosomal stalk of the 50S ribosomal subunit. Interacts with L10 and the large rRNA to form the base of the stalk. L10 forms an elongated spine to which L12 dimers bind in a sequential fashion forming a multimeric L10(L12)X complex. Post-translationally, one or more lysine residues are methylated.

Its function is as follows. Forms part of the ribosomal stalk which helps the ribosome interact with GTP-bound translation factors. The chain is Large ribosomal subunit protein uL11 from Shewanella loihica (strain ATCC BAA-1088 / PV-4).